Consider the following 393-residue polypeptide: Ferrochelatase, mitochondrial (393 aa).

A mitochondrion-targeting transit peptide spans 1–31; it reads MLSRTIRTQGSFLRRSQLTITRSFSVTFNMQ. The active site involves D351.

It belongs to the ferrochelatase family. In terms of processing, the leader peptide may be processed in two proteolytic steps, first between Ser-23 and Phe-24, second and by a different protease, to yield the mature protein.

It localises to the mitochondrion inner membrane. The catalysed reaction is heme b + 2 H(+) = protoporphyrin IX + Fe(2+). It functions in the pathway porphyrin-containing compound metabolism; protoheme biosynthesis; protoheme from protoporphyrin-IX: step 1/1. In terms of biological role, catalyzes the ferrous insertion into protoporphyrin IX. The sequence is that of Ferrochelatase, mitochondrial (HEM15) from Saccharomyces cerevisiae (strain ATCC 204508 / S288c) (Baker's yeast).